A 328-amino-acid polypeptide reads, in one-letter code: Alpha-tubulin N-acetyltransferase 2 (328 aa).

One can recognise an N-acetyltransferase domain in the interval 5 to 185 (SQVALLPKLS…NNFVVFHRYF (181 aa)). Residues 119 to 132 (FFVD…GFGK) and 155 to 164 (SVKFLAFLRK) contribute to the acetyl-CoA site. Disordered stretches follow at residues 219-261 (EYQS…PGKK) and 282-328 (GGDP…TPEH). Over residues 238–248 (TPPPPLPPPLV) the composition is skewed to pro residues. Residues 312 to 328 (PTRSGVQYNIISGTPEH) are compositionally biased toward polar residues.

This sequence belongs to the acetyltransferase ATAT1 family.

The enzyme catalyses L-lysyl-[alpha-tubulin] + acetyl-CoA = N(6)-acetyl-L-lysyl-[alpha-tubulin] + CoA + H(+). Its function is as follows. Specifically acetylates 'Lys-40' in alpha-tubulin on the lumenal side of microtubules. Promotes microtubule destabilization and accelerates microtubule dynamics; this activity may be independent of acetylation activity. Acetylates alpha-tubulin with a slow enzymatic rate, due to a catalytic site that is not optimized for acetyl transfer. Enters the microtubule through each end and diffuses quickly throughout the lumen of microtubules. Acetylates only long/old microtubules because of its slow acetylation rate since it does not have time to act on dynamically unstable microtubules before the enzyme is released. The sequence is that of Alpha-tubulin N-acetyltransferase 2 from Trypanosoma cruzi (strain CL Brener).